Consider the following 53-residue polypeptide: MLKWILILLIVAAVAGLLGMHSLAGAAMTGAKILIAIVLILFLLAVLGIIAIA.

The next 2 helical transmembrane spans lie at 4 to 24 (WILILLIVAAVAGLLGMHSLA) and 33 to 53 (ILIAIVLILFLLAVLGIIAIA).

It belongs to the UPF0391 family.

The protein resides in the cell membrane. The chain is UPF0391 membrane protein Meso_3392 from Chelativorans sp. (strain BNC1).